The sequence spans 518 residues: Homoserine O-acetyltransferase (518 aa).

In terms of domain architecture, AB hydrolase-1 spans Asn-69–Leu-468. Ser-182 is a catalytic residue. Catalysis depends on Ser-182, which acts as the Nucleophile. The interval Arg-267 to Pro-365 is disordered. The segment covering Pro-290–Arg-303 has biased composition (basic and acidic residues). Over residues Arg-310–Pro-341 the composition is skewed to low complexity. Active-site residues include Asp-435 and His-464.

This sequence belongs to the AB hydrolase superfamily. MetX family.

It carries out the reaction L-homoserine + acetyl-CoA = O-acetyl-L-homoserine + CoA. The protein operates within amino-acid biosynthesis; L-methionine biosynthesis via de novo pathway; O-acetyl-L-homoserine from L-homoserine: step 1/1. Functionally, commits homoserine to the methionine biosynthesis pathway by catalyzing its O-acetylation. The sequence is that of Homoserine O-acetyltransferase (MET2) from Ascobolus immersus.